Consider the following 541-residue polypeptide: Major facilitator-type transporter ecdD (541 aa).

Residues 15–35 (AWPAILISGFVAFGGILFGYD) traverse the membrane as a helical segment. The N-linked (GlcNAc...) asparagine glycan is linked to N64. A run of 4 helical transmembrane segments spans residues 72–92 (AIVS…SPMG), 106–126 (GIFV…PFLA), 129–149 (FFAG…QSET), and 156–176 (GFIV…ASVL). N-linked (GlcNAc...) asparagine glycosylation is found at N178 and N184. A helical membrane pass occupies residues 191–211 (IPIAVQFAWSIILVGGMLILP). N253 carries N-linked (GlcNAc...) asparagine glycosylation. Helical transmembrane passes span 277-297 (LVTG…FIMY), 313-333 (VITL…LYAI), 340-360 (PVLL…AVLG), 384-404 (IAFI…SAWV), 418-440 (SLSM…TPYL), and 454-474 (IFFI…FMIY).

Belongs to the major facilitator superfamily. Sugar transporter (TC 2.A.1.1) family.

The protein localises to the membrane. This is Major facilitator-type transporter ecdD from Aspergillus rugulosus (Emericella rugulosa).